A 338-amino-acid chain; its full sequence is uncharacterized protein (338 aa).

Positions 1–20 (MYNNNQNHHNNDNNMNKDEP) are disordered. Positions 9 to 20 (HNNDNNMNKDEP) are enriched in basic and acidic residues. Residues N37, N83, N97, N105, N114, and N122 are each glycosylated (N-linked (GlcNAc...) asparagine). Positions 55–92 (VNSGNNNNNNNNNNNNNNNNNNNNNNNNNDSIVINMDT) are disordered. Residues 59–92 (NNNNNNNNNNNNNNNNNNNNNNNNNDSIVINMDT) are compositionally biased toward low complexity. The next 3 membrane-spanning stretches (helical) occupy residues 148–168 (YKKF…IVLI), 178–198 (FHAY…FLLI), and 202–222 (ILSI…FLKV). N-linked (GlcNAc...) asparagine glycans are attached at residues N229, N240, N286, N302, N317, and N322. Disordered regions lie at residues 279–303 (SNLN…NSNS) and 316–338 (LNSS…TNEE). Residues 280-294 (NLNRNNNNSNNVNNN) are compositionally biased toward low complexity. Low complexity predominate over residues 316 to 327 (LNSSGSNSSIYS). The segment covering 328 to 338 (DVQNDIGTNEE) has biased composition (polar residues).

The protein resides in the membrane. This is an uncharacterized protein from Dictyostelium discoideum (Social amoeba).